We begin with the raw amino-acid sequence, 699 residues long: MTAIRGGSRRAPGLALALLGGVLLGACHGDENAQVNALPGFVSGSVRKTAYDGASDDLLTAGLGKTGLGSDTRPGFANPAQPSAAELRRLAIYSNYRALVDITPNGGYGRFWGPNVDLAGNDTLGEGKIAGTEYLAYSDDGSGRKNVTLLVQVPASFDPANPCIVTATASGSRGVYGAIAAAGEWGLKRGCAVAYNDKGGGNGAHEIGTGVVTLIDGTLATASSAGSSSLFTASESSSTLAAFNSAFPNRYAYKHAHSQQNPEQDWGRVTLQAVEFAYWALNEQFGPVVDGTRHGIRYRPGDITTIAASVSNGGGSALAAAEQDTRGWITAVVVGEPQINVRMTPGVTVEQGGAPVPSFGRPLADYATLANLLQPCAAAAVAATGAPYLSALPMGVTQSIRTQRCATLAAAGLVSGADTASQASDALAQLHAAGYLADSDLLQAPMWDSQAMPAIAVTYANAYTRSRVTDNLCNFSFATTNPVTGAVAAPAVSPMTNLFGAGNGVPPTNGINLVFNGASGGVDHRLATPDASFAGAFCLRQLWAANQLGIGTNVDAVRVAANLQHKPAIIVHGRSDALVPVNHASRAYVAQNSATEGRASQLSFYEVTNGQHFDAFLSVPGFDTRFVPVHYYDEQALNLMWNHLKSGAPLPPSQVIRTVPRGGVPGAAPALSTANLPPIVQSPGANAIAVNAGVIDVPL.

The signal sequence occupies residues 1–33 (MTAIRGGSRRAPGLALALLGGVLLGACHGDENA). Catalysis depends on Ser-311, which acts as the Charge relay system.

It belongs to the D-(-)-3-hydroxybutyrate oligomer hydrolase family.

The protein localises to the secreted. It carries out the reaction (3R)-hydroxybutanoate dimer + H2O = 2 (R)-3-hydroxybutanoate + H(+). It functions in the pathway lipid metabolism; butanoate metabolism. Functionally, participates in the degradation of poly-3-hydroxybutyrate (PHB). It works downstream of poly(3-hydroxybutyrate) depolymerase, hydrolyzing D(-)-3-hydroxybutyrate oligomers of various length (3HB-oligomers) into 3HB-monomers. This chain is D-(-)-3-hydroxybutyrate oligomer hydrolase, found in Burkholderia pseudomallei (strain 1106a).